Here is a 630-residue protein sequence, read N- to C-terminus: Ribonucleoside-diphosphate reductase large subunit (630 aa).

Residues S67, 82-83 (AC), G111, 317-321 (NLCSE), and 459-463 (PNATS) contribute to the substrate site. Cysteines 83 and 334 form a disulfide. N317 acts as the Proton acceptor in catalysis. Catalysis depends on C319, which acts as the Cysteine radical intermediate. E321 serves as the catalytic Proton acceptor.

Belongs to the ribonucleoside diphosphate reductase large chain family. As to quaternary structure, heterotetramer composed of a homodimer of the large subunit (R1) and a homodimer of the small subunit (R2). Larger multisubunit protein complex are also active, composed of (R1)n(R2)n.

The catalysed reaction is a 2'-deoxyribonucleoside 5'-diphosphate + [thioredoxin]-disulfide + H2O = a ribonucleoside 5'-diphosphate + [thioredoxin]-dithiol. Under complex allosteric control mediated by deoxynucleoside triphosphates and ATP binding. The type of nucleotide bound at the specificity site determines substrate preference. It seems probable that ATP makes the enzyme reduce CDP and UDP, dGTP favors ADP reduction and dTTP favors GDP reduction. In terms of biological role, ribonucleoside-diphosphate reductase holoenzyme provides the precursors necessary for viral DNA synthesis. Allows virus growth in non-dividing cells. Catalyzes the biosynthesis of deoxyribonucleotides from the corresponding ribonucleotides. This Aedes vexans (Inland floodwater mosquito) protein is Ribonucleoside-diphosphate reductase large subunit.